The primary structure comprises 394 residues: Elongation factor Tu (394 aa).

The tr-type G domain maps to 10–204 (KPHVNVGTIG…YLDSYIPEPE (195 aa)). The interval 19–26 (GHVDHGKT) is G1. 19-26 (GHVDHGKT) contributes to the GTP binding site. Thr-26 lines the Mg(2+) pocket. The tract at residues 60-64 (GITIN) is G2. Residues 81–84 (DCPG) are G3. Residues 81–85 (DCPGH) and 136–139 (NKCD) each bind GTP. A G4 region spans residues 136 to 139 (NKCD). The interval 174 to 176 (SAL) is G5.

Belongs to the TRAFAC class translation factor GTPase superfamily. Classic translation factor GTPase family. EF-Tu/EF-1A subfamily. Monomer.

It localises to the cytoplasm. It carries out the reaction GTP + H2O = GDP + phosphate + H(+). Its function is as follows. GTP hydrolase that promotes the GTP-dependent binding of aminoacyl-tRNA to the A-site of ribosomes during protein biosynthesis. The chain is Elongation factor Tu from Enterobacter sp. (strain 638).